Here is a 191-residue protein sequence, read N- to C-terminus: Thymidine kinase (191 aa).

ATP-binding positions include 9-16 (GTMNSGKT) and 85-88 (DEAQ). Glu86 functions as the Proton acceptor in the catalytic mechanism. Zn(2+) contacts are provided by Cys143, Cys146, Cys180, and His183.

Belongs to the thymidine kinase family. As to quaternary structure, homotetramer.

It is found in the cytoplasm. The enzyme catalyses thymidine + ATP = dTMP + ADP + H(+). The polypeptide is Thymidine kinase (Streptococcus gordonii (strain Challis / ATCC 35105 / BCRC 15272 / CH1 / DL1 / V288)).